The chain runs to 2036 residues: Putative mediator of RNA polymerase II transcription subunit 24 (2036 aa).

8 disordered regions span residues 51-70 (NNNNSNNNNNNNNNNNNNNV), 159-184 (DNIENSNNNNNNNNNNNNNNSNNNIG), 212-451 (SPSP…QTTT), 501-580 (KSVN…NNNN), 754-840 (NLKN…SHQK), 928-1124 (NNNN…NKDL), 1375-1419 (NNKN…NNNN), and 1565-1608 (NSSA…NGDT). Residues 212 to 229 (SPSPSSSSSSSTSPSSQQ) show a composition bias toward low complexity. The span at 260–270 (EIMKVKEEPIK) shows a compositional bias: basic and acidic residues. Low complexity-rich tracts occupy residues 273–291 (TTTTTTSTTTTTSTTSTTT), 300–311 (TNGNGEETTITT), 387–451 (QPQP…QTTT), 501–539 (KSVNNNNNNNNNNNNNNNNNNNNNYNNNNNDSMDQNSNN), 547–580 (NNNNINNNNNNNNNNNNNNNNNNNNNNNNNNNNN), and 754–770 (NLKNNKNNNNNNNNSNG). The stretch at 505–584 (NNNNNNNNNN…NNNNNNINNI (80 aa)) forms a coiled coil. The span at 778–787 (GSSTDGSNKL) shows a compositional bias: polar residues. Low complexity-rich tracts occupy residues 788–808 (SSTNIEEGNNNNNSSTHLNGN) and 928–943 (NNNNNTNTNNINNNKN). Residues 943 to 977 (NKNSKKSNNKNKNNKNNNKKNKNNNNNNNNNNNNN) adopt a coiled-coil conformation. Residues 944–964 (KNSKKSNNKNKNNKNNNKKNK) are compositionally biased toward basic residues. Composition is skewed to low complexity over residues 965–999 (NNNNNNNNNNNNNNNNNNNNNNNNNNNNNNNNNNN), 1017–1118 (NNNN…NNNN), 1385–1419 (SNNSSNNSINNINNNNNNNNNNNNNNNNNNNNNNN), 1565–1584 (NSSAYSTTTTTSASTSLPKS), and 1594–1608 (SSNTSTTTTKNNGDT). Positions 1915–1968 (SKNQSLKKKQKLKQKKQQHNNNNGGEYNIDQDHIEQIQQQQQQYQKQQQQRKDE) form a coiled coil.

Belongs to the Mediator complex subunit 24 family. As to quaternary structure, component of the Mediator complex.

The protein localises to the nucleus. Component of the Mediator complex, a coactivator involved in the regulated transcription of nearly all RNA polymerase II-dependent genes. Mediator functions as a bridge to convey information from gene-specific regulatory proteins to the basal RNA polymerase II transcription machinery. Mediator is recruited to promoters by direct interactions with regulatory proteins and serves as a scaffold for the assembly of a functional preinitiation complex with RNA polymerase II and the general transcription factors. The chain is Putative mediator of RNA polymerase II transcription subunit 24 (med24) from Dictyostelium discoideum (Social amoeba).